A 330-amino-acid chain; its full sequence is Molybdate/tungstate import ATP-binding protein WtpC (330 aa).

In terms of domain architecture, ABC transporter spans L3–L232. G34–T41 is an ATP binding site.

Belongs to the ABC transporter superfamily. Sulfate/tungstate importer (TC 3.A.1.6) family. In terms of assembly, the complex is composed of two ATP-binding proteins (WtpC), two transmembrane proteins (WtpB) and a solute-binding protein (WtpA).

Its subcellular location is the cell membrane. The catalysed reaction is tungstate(in) + ATP + H2O = tungstate(out) + ADP + phosphate + H(+). Its function is as follows. Part of the ABC transporter complex WtpABC involved in molybdate/tungstate import. Responsible for energy coupling to the transport system. The protein is Molybdate/tungstate import ATP-binding protein WtpC (wtpC) of Thermococcus kodakarensis (strain ATCC BAA-918 / JCM 12380 / KOD1) (Pyrococcus kodakaraensis (strain KOD1)).